Reading from the N-terminus, the 173-residue chain is Protein tyrosine phosphatase type IVA 3 (173 aa).

One can recognise a Tyrosine-protein phosphatase domain in the interval Ala8–Lys161. A disulfide bridge links Cys49 with Cys104. Asp72 (proton donor) is an active-site residue. Cys104 serves as the catalytic Phosphocysteine intermediate. A substrate-binding site is contributed by Arg110. Residue Cys170 is modified to Cysteine methyl ester. A lipid anchor (S-farnesyl cysteine) is attached at Cys170. Residues Cys171–Met173 constitute a propeptide, removed in mature form.

Belongs to the protein-tyrosine phosphatase family. As to quaternary structure, interacts with tubulin. In terms of processing, farnesylated. Farnesylation is required for membrane targeting. In terms of tissue distribution, mainly expressed in cardiomyocytes and skeletal muscle; also found in pancreas. Consistently overexpressed in colon cancer metastasis.

Its subcellular location is the cell membrane. The protein resides in the early endosome. It carries out the reaction O-phospho-L-tyrosyl-[protein] + H2O = L-tyrosyl-[protein] + phosphate. Its activity is regulated as follows. Inhibited by sodium orthovanadate and peroxovanadium compounds, and by pentamidine. Its function is as follows. Protein tyrosine phosphatase which stimulates progression from G1 into S phase during mitosis. Enhances cell proliferation, cell motility and invasive activity, and promotes cancer metastasis. May be involved in the progression of cardiac hypertrophy by inhibiting intracellular calcium mobilization in response to angiotensin II. In Homo sapiens (Human), this protein is Protein tyrosine phosphatase type IVA 3 (PTP4A3).